A 139-amino-acid chain; its full sequence is Peptide methionine sulfoxide reductase MsrB (139 aa).

One can recognise a MsrB domain in the interval 9–131 (TPSDNTELTE…NSASLSFIDD (123 aa)). The Zn(2+) site is built by Cys-48, Cys-51, Cys-97, and Cys-100. Residue Cys-120 is the Nucleophile of the active site.

It belongs to the MsrB Met sulfoxide reductase family. Requires Zn(2+) as cofactor.

It catalyses the reaction L-methionyl-[protein] + [thioredoxin]-disulfide + H2O = L-methionyl-(R)-S-oxide-[protein] + [thioredoxin]-dithiol. This is Peptide methionine sulfoxide reductase MsrB from Pectobacterium carotovorum subsp. carotovorum (strain PC1).